The sequence spans 157 residues: Putative gamma-glutamylcyclotransferase CG2811 (157 aa).

14-17 (YGTL) contacts substrate. The active-site Proton acceptor is the Glu89.

Belongs to the gamma-glutamylcyclotransferase family.

In terms of biological role, putative gamma-glutamylcyclotransferase. The sequence is that of Putative gamma-glutamylcyclotransferase CG2811 from Drosophila melanogaster (Fruit fly).